The primary structure comprises 122 residues: Large ribosomal subunit protein bL12 (122 aa).

The interval 96–122 (APKSLKTGLSKDEANEMKKKLEDAGAT) is disordered. Over residues 104-122 (LSKDEANEMKKKLEDAGAT) the composition is skewed to basic and acidic residues.

It belongs to the bacterial ribosomal protein bL12 family. In terms of assembly, homodimer. Part of the ribosomal stalk of the 50S ribosomal subunit. Forms a multimeric L10(L12)X complex, where L10 forms an elongated spine to which 2 to 4 L12 dimers bind in a sequential fashion. Binds GTP-bound translation factors.

Forms part of the ribosomal stalk which helps the ribosome interact with GTP-bound translation factors. Is thus essential for accurate translation. This Liberibacter asiaticus (Citrus greening disease) protein is Large ribosomal subunit protein bL12.